Consider the following 582-residue polypeptide: Hemagglutinin-neuraminidase (582 aa).

At 1–34 the chain is on the intravirion side; that stretch reads MEPSKLFTMSDNATFAPGPVVNAADKKTFRTCFR. The chain crosses the membrane as a helical span at residues 35-55; it reads ILVLSVQAVTLILVIVTLGEL. Residues 56 to 582 are Virion surface-facing; the sequence is VRMINDQGLS…LPVLTRLTIT (527 aa). Intrachain disulfides connect Cys-178–Cys-202, Cys-192–Cys-253, and Cys-244–Cys-257. 2 N-linked (GlcNAc...) asparagine; by host glycosylation sites follow: Asn-284 and Asn-329. 3 disulfides stabilise this stretch: Cys-350/Cys-471, Cys-382/Cys-392, and Cys-465/Cys-475. N-linked (GlcNAc...) asparagine; by host glycans are attached at residues Asn-400 and Asn-448. Residue Asn-507 is glycosylated (N-linked (GlcNAc...) asparagine; by host). Cys-545 and Cys-556 form a disulfide bridge.

It belongs to the paramyxoviruses hemagglutinin-neuraminidase family. As to quaternary structure, homotetramer; composed of disulfide-linked homodimers. Interacts with F protein trimer.

The protein resides in the virion membrane. It is found in the host cell membrane. The enzyme catalyses Hydrolysis of alpha-(2-&gt;3)-, alpha-(2-&gt;6)-, alpha-(2-&gt;8)- glycosidic linkages of terminal sialic acid residues in oligosaccharides, glycoproteins, glycolipids, colominic acid and synthetic substrates.. Its function is as follows. Attaches the virus to alpha-2,3-linked sialic acid-containing cell receptors and thereby initiating infection. Binding of HN protein to the receptor induces a conformational change that allows the F protein to trigger virion/cell membranes fusion. Binds to the glycan motifs sialyl Lewis (SLe) and GM2 ganglioside (GM2-glycan). Neuraminidase activity ensures the efficient spread of the virus by dissociating the mature virions from the neuraminic acid containing glycoproteins. This chain is Hemagglutinin-neuraminidase, found in Mumps orthorubulavirus (MuV).